The following is a 76-amino-acid chain: Conotoxin Vc6.9 (76 aa).

Positions 1–19 (MEKLTILLLVAAVLMSTQA) are cleaved as a signal peptide. Residues 20–41 (LMQEQRQKAKINLFSKRKPSAE) constitute a propeptide that is removed on maturation. 3 cysteine pairs are disulfide-bonded: C49–C63, C56–C67, and C62–C72.

The protein belongs to the conotoxin O2 superfamily. In terms of tissue distribution, expressed by the venom duct.

It localises to the secreted. Functionally, inhibits voltage-gated ion channels. In Conus victoriae (Queen Victoria cone), this protein is Conotoxin Vc6.9.